Reading from the N-terminus, the 402-residue chain is Argininosuccinate synthase (402 aa).

ATP is bound by residues 13 to 21 (AYSGGLDTS) and A40. Residues Y91 and S96 each coordinate L-citrulline. G121 contacts ATP. Positions 123, 127, and 128 each coordinate L-aspartate. Position 127 (N127) interacts with L-citrulline. Positions 131, 180, 189, 265, and 277 each coordinate L-citrulline.

This sequence belongs to the argininosuccinate synthase family. Type 1 subfamily. Homotetramer.

It is found in the cytoplasm. It catalyses the reaction L-citrulline + L-aspartate + ATP = 2-(N(omega)-L-arginino)succinate + AMP + diphosphate + H(+). It participates in amino-acid biosynthesis; L-arginine biosynthesis; L-arginine from L-ornithine and carbamoyl phosphate: step 2/3. The sequence is that of Argininosuccinate synthase from Leptospira biflexa serovar Patoc (strain Patoc 1 / Ames).